The primary structure comprises 599 residues: Pentatricopeptide repeat-containing protein At3g62540, mitochondrial (599 aa).

A mitochondrion-targeting transit peptide spans 1 to 99; it reads MAAAPWLYLS…RGFSSGSSNV (99 aa). 10 PPR repeats span residues 194–228, 230–262, 263–293, 297–331, 332–366, 367–401, 402–436, 437–471, 472–506, and 507–541; these read ASRTYNSMMSILAKTRQFETMVSVLEEMGTKGLLT, ETFTIAMKAFAAAKERKKAVGIFELMKKYKFKI, GVETINCLLDSLGRAKLGKEAQVLFDKLKER, NMMTYTVLLNGWCRVRNLIEAARIWNDMIDHGLKP, DIVAHNVMLEGLLRSMKKSDAIKLFHVMKSKGPCP, NVRSYTIMIRDFCKQSSMETAIEYFDDMVDSGLQP, DAAVYTCLITGFGTQKKLDTVYELLKEMQEKGHPP, DGKTYNALIKLMANQKMPEHGTRIYNKMIQNEIEP, SIHTFNMIMKSYFVARNYEMGRAVWDEMIKKGICP, and DDNSYTVLIRGLISEGKSREACRYLEEMLDKGMKT.

It belongs to the PPR family. P subfamily.

The protein resides in the mitochondrion. The protein is Pentatricopeptide repeat-containing protein At3g62540, mitochondrial of Arabidopsis thaliana (Mouse-ear cress).